The primary structure comprises 230 residues: Sugar fermentation stimulation protein homolog (230 aa).

The protein belongs to the SfsA family.

This chain is Sugar fermentation stimulation protein homolog, found in Clostridium botulinum (strain 657 / Type Ba4).